The sequence spans 534 residues: Flavonoid-6-hydroxylase (534 aa).

The helical transmembrane segment at 3–23 threads the bilayer; that stretch reads FISFVYTLIAFSSLLYFYLIW. Position 467 (cysteine 467) interacts with heme.

Belongs to the cytochrome P450 family. Requires heme as cofactor. As to expression, expressed in leaves.

Its subcellular location is the membrane. The enzyme catalyses genkwanin + reduced [NADPH--hemoprotein reductase] + O2 = scutellarein 7-methyl ether + oxidized [NADPH--hemoprotein reductase] + H2O. It catalyses the reaction (2S)-sakuranetin + reduced [NADPH--hemoprotein reductase] + O2 = (2S)-7-methylcarthamidin + oxidized [NADPH--hemoprotein reductase] + H2O + H(+). The catalysed reaction is apigenin 4',7-dimethyl ether + reduced [NADPH--hemoprotein reductase] + O2 = ladanein + oxidized [NADPH--hemoprotein reductase] + H2O + H(+). It carries out the reaction (2S)-naringenin 4',7-dimethyl ether + reduced [NADPH--hemoprotein reductase] + O2 = (2S)-carthamidin-4',7-dimethyl ether + oxidized [NADPH--hemoprotein reductase] + H2O + H(+). The protein operates within flavonoid metabolism. Its function is as follows. Hydroxylase involved in the biosynthesis of polymethoxylated flavonoids natural products such as nevadensin and salvigenin, aroma compounds which contribute to the flavor of sweet basil, and exhibit pharmacological activities such as anti-allergic, anti-oxidant, antibacterial, anti-proliferative, and anti-inflammatory effects. Catalyzes the 6-hydroxylation of 7-O-methylated precursors such as the conversion of genkwanin (GENK) to scutellarein-7-methyl ether (SCU7Me). Can also use, with a lower efficiency, apigenin-7,4'-dimethyl ether (AdM), naringenin-7-methyl ether (SAK) and naringenin-7,4'-dimethyl ether (NdM) as substrates. The protein is Flavonoid-6-hydroxylase of Ocimum basilicum (Sweet basil).